The primary structure comprises 333 residues: Acetoin:2,6-dichlorophenolindophenol oxidoreductase subunit alpha (333 aa).

In terms of assembly, tetramer of 2 alpha and 2 beta subunits. Thiamine diphosphate serves as cofactor.

The protein operates within ketone degradation; acetoin degradation. Its function is as follows. Catalyzes the 2,6-dichlorophenolindophenol-dependent cleavage of acetoin into acetate and acetaldehyde, in vitro. The alpha subunit is probably the catalytic subunit of the enzyme. This chain is Acetoin:2,6-dichlorophenolindophenol oxidoreductase subunit alpha (acoA), found in Cupriavidus necator (strain ATCC 17699 / DSM 428 / KCTC 22496 / NCIMB 10442 / H16 / Stanier 337) (Ralstonia eutropha).